Here is a 365-residue protein sequence, read N- to C-terminus: Chorismate synthase (365 aa).

Residues Arg-48 and Arg-54 each contribute to the NADP(+) site. FMN-binding positions include 129–131 (RSS), 241–242 (NA), Gly-285, 300–304 (KPTSS), and Arg-326.

This sequence belongs to the chorismate synthase family. As to quaternary structure, homotetramer. FMNH2 is required as a cofactor.

It catalyses the reaction 5-O-(1-carboxyvinyl)-3-phosphoshikimate = chorismate + phosphate. It participates in metabolic intermediate biosynthesis; chorismate biosynthesis; chorismate from D-erythrose 4-phosphate and phosphoenolpyruvate: step 7/7. In terms of biological role, catalyzes the anti-1,4-elimination of the C-3 phosphate and the C-6 proR hydrogen from 5-enolpyruvylshikimate-3-phosphate (EPSP) to yield chorismate, which is the branch point compound that serves as the starting substrate for the three terminal pathways of aromatic amino acid biosynthesis. This reaction introduces a second double bond into the aromatic ring system. The chain is Chorismate synthase from Parvibaculum lavamentivorans (strain DS-1 / DSM 13023 / NCIMB 13966).